We begin with the raw amino-acid sequence, 172 residues long: Molybdopterin synthase catalytic subunit (172 aa).

Residue Ser20 is modified to Phosphoserine. Substrate contacts are provided by residues 127–128, Lys143, and 150–152; these read HR and KKE.

This sequence belongs to the MoaE family. MOCS2B subfamily. In terms of assembly, heterotetramer; composed of 2 small (MOCS2A) and 2 large (MOCS2B) subunits.

Its subcellular location is the cytoplasm. It is found in the cytosol. It carries out the reaction 2 [molybdopterin-synthase sulfur-carrier protein]-C-terminal-Gly-aminoethanethioate + cyclic pyranopterin phosphate + H2O = molybdopterin + 2 [molybdopterin-synthase sulfur-carrier protein]-C-terminal Gly-Gly + 2 H(+). Its pathway is cofactor biosynthesis; molybdopterin biosynthesis. Functionally, catalytic subunit of the molybdopterin synthase complex, a complex that catalyzes the conversion of precursor Z into molybdopterin. Acts by mediating the incorporation of 2 sulfur atoms from thiocarboxylated MOCS2A into precursor Z to generate a dithiolene group. The chain is Molybdopterin synthase catalytic subunit from Pongo abelii (Sumatran orangutan).